Reading from the N-terminus, the 638-residue chain is Phosphomethylpyrimidine synthase (638 aa).

Residues Asn-243, Met-272, Tyr-301, His-337, 357-359, 398-401, and Glu-437 contribute to the substrate site; these read SRG and DGLR. A Zn(2+)-binding site is contributed by His-441. Tyr-464 lines the substrate pocket. His-505 is a binding site for Zn(2+). Cys-585, Cys-588, and Cys-593 together coordinate [4Fe-4S] cluster.

This sequence belongs to the ThiC family. In terms of assembly, homodimer. [4Fe-4S] cluster serves as cofactor.

It carries out the reaction 5-amino-1-(5-phospho-beta-D-ribosyl)imidazole + S-adenosyl-L-methionine = 4-amino-2-methyl-5-(phosphooxymethyl)pyrimidine + CO + 5'-deoxyadenosine + formate + L-methionine + 3 H(+). It participates in cofactor biosynthesis; thiamine diphosphate biosynthesis. Functionally, catalyzes the synthesis of the hydroxymethylpyrimidine phosphate (HMP-P) moiety of thiamine from aminoimidazole ribotide (AIR) in a radical S-adenosyl-L-methionine (SAM)-dependent reaction. This Aromatoleum aromaticum (strain DSM 19018 / LMG 30748 / EbN1) (Azoarcus sp. (strain EbN1)) protein is Phosphomethylpyrimidine synthase.